A 136-amino-acid polypeptide reads, in one-letter code: Protein PsiE (136 aa).

A run of 4 helical transmembrane segments spans residues 15–35, 55–75, 82–102, and 108–128; these read ILQT…VVFL, YELV…ALIV, FHFP…RLII, and PLDV…LWLC.

Belongs to the PsiE family.

It is found in the cell inner membrane. This is Protein PsiE from Escherichia coli (strain SE11).